A 295-amino-acid polypeptide reads, in one-letter code: Pyridoxal 5'-phosphate synthase subunit PdxS (295 aa).

Residue aspartate 25 participates in D-ribose 5-phosphate binding. Residue lysine 82 is the Schiff-base intermediate with D-ribose 5-phosphate of the active site. Glycine 154 serves as a coordination point for D-ribose 5-phosphate. Arginine 166 contacts D-glyceraldehyde 3-phosphate. Residues glycine 215 and 236–237 (GS) contribute to the D-ribose 5-phosphate site.

Belongs to the PdxS/SNZ family. In the presence of PdxT, forms a dodecamer of heterodimers.

The enzyme catalyses aldehydo-D-ribose 5-phosphate + D-glyceraldehyde 3-phosphate + L-glutamine = pyridoxal 5'-phosphate + L-glutamate + phosphate + 3 H2O + H(+). It participates in cofactor biosynthesis; pyridoxal 5'-phosphate biosynthesis. Its function is as follows. Catalyzes the formation of pyridoxal 5'-phosphate from ribose 5-phosphate (RBP), glyceraldehyde 3-phosphate (G3P) and ammonia. The ammonia is provided by the PdxT subunit. Can also use ribulose 5-phosphate and dihydroxyacetone phosphate as substrates, resulting from enzyme-catalyzed isomerization of RBP and G3P, respectively. The chain is Pyridoxal 5'-phosphate synthase subunit PdxS from Staphylococcus aureus (strain Mu3 / ATCC 700698).